A 175-amino-acid chain; its full sequence is Protein ppBat (175 aa).

Positions 74 and 111 each coordinate Zn(2+). Riboflavin-binding residues include Asn161 and Trp164.

In terms of assembly, homodimer.

Functionally, binds flavin derivatives, such as lumichrome, riboflavin, FMN, and FAD. May act as a flavin storage protein. Appears to lack proteolytic or chaperone activities. This chain is Protein ppBat, found in Bacteroides thetaiotaomicron (strain ATCC 29148 / DSM 2079 / JCM 5827 / CCUG 10774 / NCTC 10582 / VPI-5482 / E50).